The following is an 833-amino-acid chain: DNA gyrase subunit A (833 aa).

Residues 35–498 form the Topo IIA-type catalytic domain; sequence LPDVRDGMKP…SEDMFEDEDL (464 aa). Tyr-123 serves as the catalytic O-(5'-phospho-DNA)-tyrosine intermediate. The GyrA-box signature appears at 525-531; it reads QKRGGRG. The disordered stretch occupies residues 803–833; the sequence is RVDIEDDELDEDESIEEERDDRSEVEQGENE. The span at 806-821 shows a compositional bias: acidic residues; it reads IEDDELDEDESIEEER.

The protein belongs to the type II topoisomerase GyrA/ParC subunit family. Heterotetramer, composed of two GyrA and two GyrB chains. In the heterotetramer, GyrA contains the active site tyrosine that forms a transient covalent intermediate with DNA, while GyrB binds cofactors and catalyzes ATP hydrolysis.

The protein resides in the cytoplasm. It carries out the reaction ATP-dependent breakage, passage and rejoining of double-stranded DNA.. In terms of biological role, a type II topoisomerase that negatively supercoils closed circular double-stranded (ds) DNA in an ATP-dependent manner to modulate DNA topology and maintain chromosomes in an underwound state. Negative supercoiling favors strand separation, and DNA replication, transcription, recombination and repair, all of which involve strand separation. Also able to catalyze the interconversion of other topological isomers of dsDNA rings, including catenanes and knotted rings. Type II topoisomerases break and join 2 DNA strands simultaneously in an ATP-dependent manner. This chain is DNA gyrase subunit A, found in Halalkalibacterium halodurans (strain ATCC BAA-125 / DSM 18197 / FERM 7344 / JCM 9153 / C-125) (Bacillus halodurans).